The primary structure comprises 401 residues: cAMP-dependent protein kinase type II-alpha regulatory subunit (401 aa).

Position 2 is an N-acetylserine (S2). The dimerization and phosphorylation stretch occupies residues 2–135 (SHIQIPPGLT…RLQEACKDIL (134 aa)). Residues 43-65 (ARSRASTPPAAPPSGSQDFDPGA) are disordered. Positions 46-58 (RASTPPAAPPSGS) are enriched in low complexity. Residues S48, S75, and S77 each carry the phosphoserine modification. Position 96 is a phosphoserine; by PKA (S96). 3',5'-cyclic AMP contacts are provided by residues 136–257 (LFKN…ESVP), E205, R214, 258–401 (LLKS…DPGQ), E335, and R344. Phosphothreonine; by PDPK1 is present on T212. Phosphoserine is present on residues S347 and S392.

The protein belongs to the cAMP-dependent kinase regulatory chain family. As to quaternary structure, the inactive form of the enzyme is composed of two regulatory chains and two catalytic chains. Activation by cAMP produces two active catalytic monomers and a regulatory dimer that binds four cAMP molecules. Interacts with AKAP4 and CBFA2T3. Interacts with the phosphorylated form of PJA2. Interacts with MYRIP; this interaction may link PKA to components of the exocytosis machinery, thus facilitating exocytosis, including insulin release. Forms a complex composed of PRKAR2A, GSK3B and GSKIP through GSKIP interaction; facilitates PKA-induced phosphorylation and regulates GSK3B activity. Interacts with ADCY8; inhibits adenylate cyclase activity through PKA phosphorylation. A second phosphorylation site has not been located. In terms of processing, phosphorylation of Thr-212 by PDPK1 seems to attenuate the activity of PKA, perhaps by strengthening interaction between the regulatory and the catalytic subunits. Four types of regulatory chains are found: I-alpha, I-beta, II-alpha, and II-beta. Their expression varies among tissues and is in some cases constitutive and in others inducible.

It is found in the cytoplasm. The protein localises to the cell membrane. Its function is as follows. Regulatory subunit of the cAMP-dependent protein kinases involved in cAMP signaling in cells. Type II regulatory chains mediate membrane association by binding to anchoring proteins, including the MAP2 kinase. The polypeptide is cAMP-dependent protein kinase type II-alpha regulatory subunit (PRKAR2A) (Bos taurus (Bovine)).